The sequence spans 120 residues: Small ribosomal subunit protein bS16 (120 aa).

The tract at residues 81–120 (GLAKRPARNNPQKAEPGEKAKERAAKRAEKAAAPAEDAAA) is disordered. Residues 95–110 (EPGEKAKERAAKRAEK) are compositionally biased toward basic and acidic residues. Residues 111–120 (AAAPAEDAAA) show a composition bias toward low complexity.

It belongs to the bacterial ribosomal protein bS16 family.

This chain is Small ribosomal subunit protein bS16, found in Methylobacterium radiotolerans (strain ATCC 27329 / DSM 1819 / JCM 2831 / NBRC 15690 / NCIMB 10815 / 0-1).